We begin with the raw amino-acid sequence, 357 residues long: Histidinol-phosphate aminotransferase 1 (357 aa).

Residue Lys-217 is modified to N6-(pyridoxal phosphate)lysine.

The protein belongs to the class-II pyridoxal-phosphate-dependent aminotransferase family. Histidinol-phosphate aminotransferase subfamily. Homodimer. Pyridoxal 5'-phosphate is required as a cofactor.

The enzyme catalyses L-histidinol phosphate + 2-oxoglutarate = 3-(imidazol-4-yl)-2-oxopropyl phosphate + L-glutamate. It participates in amino-acid biosynthesis; L-histidine biosynthesis; L-histidine from 5-phospho-alpha-D-ribose 1-diphosphate: step 7/9. The polypeptide is Histidinol-phosphate aminotransferase 1 (Burkholderia lata (strain ATCC 17760 / DSM 23089 / LMG 22485 / NCIMB 9086 / R18194 / 383)).